The following is an 81-amino-acid chain: Photosystem I iron-sulfur center (81 aa).

2 consecutive 4Fe-4S ferredoxin-type domains span residues 2–31 (SHSV…MIPW) and 39–68 (IASA…VRVS). Positions 11, 14, 17, 21, 48, 51, 54, and 58 each coordinate [4Fe-4S] cluster.

In terms of assembly, the eukaryotic PSI reaction center is composed of at least 11 subunits. Requires [4Fe-4S] cluster as cofactor.

It localises to the plastid. It is found in the chloroplast thylakoid membrane. It carries out the reaction reduced [plastocyanin] + hnu + oxidized [2Fe-2S]-[ferredoxin] = oxidized [plastocyanin] + reduced [2Fe-2S]-[ferredoxin]. Functionally, apoprotein for the two 4Fe-4S centers FA and FB of photosystem I (PSI); essential for photochemical activity. FB is the terminal electron acceptor of PSI, donating electrons to ferredoxin. The C-terminus interacts with PsaA/B/D and helps assemble the protein into the PSI complex. Required for binding of PsaD and PsaE to PSI. PSI is a plastocyanin-ferredoxin oxidoreductase, converting photonic excitation into a charge separation, which transfers an electron from the donor P700 chlorophyll pair to the spectroscopically characterized acceptors A0, A1, FX, FA and FB in turn. The chain is Photosystem I iron-sulfur center from Daucus carota (Wild carrot).